The following is a 270-amino-acid chain: uncharacterized protein (270 aa).

The first 22 residues, 1-22, serve as a signal peptide directing secretion; the sequence is MEYIKKIALYMSVLLLIIFIGG. A lipid anchor (N-palmitoyl cysteine) is attached at C23. C23 is lipidated: S-diacylglycerol cysteine.

This sequence belongs to the staphylococcal tandem lipoprotein family.

The protein resides in the cell membrane. This is an uncharacterized protein from Staphylococcus aureus (strain N315).